A 330-amino-acid chain; its full sequence is Basic leucine zipper 2 (330 aa).

Residues 1–207 (MAQLPPKIPT…NRQSAQRSRV (207 aa)) are disordered. Over residues 21 to 34 (GHHHHAAHGHHHQR) the composition is skewed to basic residues. Over residues 45–56 (PLPPFPLPPPAP) the composition is skewed to pro residues. 2 stretches are compositionally biased toward low complexity: residues 57 to 72 (ANGGAQQQQQQQQHQP) and 139 to 151 (QPAAPAASASSPS). The segment covering 155–166 (SMNDEKQDKGET) has biased composition (basic and acidic residues). The 57-residue stretch at 188–244 (DPKRVKRILANRQSAQRSRVRKLQYISELERSVTSLQTEVSALSPRVAFLDHQRSLL) folds into the bZIP domain. Residues 190–209 (KRVKRILANRQSAQRSRVRK) form a basic motif region. The segment at 216 to 244 (LERSVTSLQTEVSALSPRVAFLDHQRSLL) is leucine-zipper. Residues 267 to 330 (GGTEEGDREA…LVIGRDPDAL (64 aa)) are disordered.

Expressed in roots, shoots and panicles.

Its subcellular location is the nucleus. In terms of biological role, transcription regulator. This Oryza sativa subsp. japonica (Rice) protein is Basic leucine zipper 2 (BZIP02).